The following is a 641-amino-acid chain: Phosphomethylpyrimidine synthase (641 aa).

Residues 1 to 12 (MTDTSTQNTATP) are compositionally biased toward polar residues. Residues 1–25 (MTDTSTQNTATPTDEYGAEIHPKHS) are disordered. Residues N200, M229, Y258, H294, 314–316 (SRG), 355–358 (DGLR), and E394 each bind substrate. H398 is a binding site for Zn(2+). Substrate is bound at residue Y421. H462 is a binding site for Zn(2+). The [4Fe-4S] cluster site is built by C542, C545, and C550.

Belongs to the ThiC family. [4Fe-4S] cluster serves as cofactor.

It carries out the reaction 5-amino-1-(5-phospho-beta-D-ribosyl)imidazole + S-adenosyl-L-methionine = 4-amino-2-methyl-5-(phosphooxymethyl)pyrimidine + CO + 5'-deoxyadenosine + formate + L-methionine + 3 H(+). It participates in cofactor biosynthesis; thiamine diphosphate biosynthesis. Its function is as follows. Catalyzes the synthesis of the hydroxymethylpyrimidine phosphate (HMP-P) moiety of thiamine from aminoimidazole ribotide (AIR) in a radical S-adenosyl-L-methionine (SAM)-dependent reaction. The sequence is that of Phosphomethylpyrimidine synthase from Corynebacterium jeikeium (strain K411).